A 321-amino-acid polypeptide reads, in one-letter code: Sex-lethal homolog (321 aa).

RRM domains follow at residues 78–156 (TNLI…FARP) and 164–244 (TNLY…VAEE).

Expressed in gonads and somatic tissues of both sexes. In the ovary, expressed in the last egg chamber of each ovariole. Highly expressed in nurse cells with low expression found in oocytes. Highly expressed in testis with lower expression in testis sheath and vas deferentia.

Its subcellular location is the nucleus. Functionally, unknown; apparently not involved in somatic sex determination. The sequence is that of Sex-lethal homolog (SXL) from Megaselia scalaris (Humpbacked fly).